The chain runs to 399 residues: Methylthioribose kinase (399 aa).

ATP contacts are provided by residues Asn-40, Lys-57, and Glu-111 to Leu-113. Residue Asp-229 participates in substrate binding. Asp-246 to Glu-248 is an ATP binding site. Arg-344 contacts substrate.

The protein belongs to the methylthioribose kinase family. As to quaternary structure, homodimer.

It carries out the reaction 5-(methylsulfanyl)-D-ribose + ATP = 5-(methylsulfanyl)-alpha-D-ribose 1-phosphate + ADP + H(+). It functions in the pathway amino-acid biosynthesis; L-methionine biosynthesis via salvage pathway; S-methyl-5-thio-alpha-D-ribose 1-phosphate from S-methyl-5'-thioadenosine (hydrolase route): step 2/2. Catalyzes the phosphorylation of methylthioribose into methylthioribose-1-phosphate. This chain is Methylthioribose kinase, found in Cronobacter sakazakii (strain ATCC BAA-894) (Enterobacter sakazakii).